We begin with the raw amino-acid sequence, 160 residues long: UPF0225 protein CGSHiGG_04185 (160 aa).

Belongs to the UPF0225 family.

This chain is UPF0225 protein CGSHiGG_04185, found in Haemophilus influenzae (strain PittGG).